The chain runs to 298 residues: N-acetylmuramic acid 6-phosphate etherase (298 aa).

Positions 55–218 (IHAQVSGGGR…STGLMIKSGK (164 aa)) constitute an SIS domain. Residue glutamate 83 is the Proton donor of the active site. Residue glutamate 114 is part of the active site.

It belongs to the GCKR-like family. MurNAc-6-P etherase subfamily. Homodimer.

It carries out the reaction N-acetyl-D-muramate 6-phosphate + H2O = N-acetyl-D-glucosamine 6-phosphate + (R)-lactate. It functions in the pathway amino-sugar metabolism; 1,6-anhydro-N-acetylmuramate degradation. It participates in amino-sugar metabolism; N-acetylmuramate degradation. The protein operates within cell wall biogenesis; peptidoglycan recycling. Functionally, specifically catalyzes the cleavage of the D-lactyl ether substituent of MurNAc 6-phosphate, producing GlcNAc 6-phosphate and D-lactate. Together with AnmK, is also required for the utilization of anhydro-N-acetylmuramic acid (anhMurNAc) either imported from the medium or derived from its own cell wall murein, and thus plays a role in cell wall recycling. In Shigella sonnei (strain Ss046), this protein is N-acetylmuramic acid 6-phosphate etherase.